A 430-amino-acid polypeptide reads, in one-letter code: Adenylosuccinate synthetase (430 aa).

GTP-binding positions include 13-19 (GDEGKGK) and 41-43 (GHT). The active-site Proton acceptor is aspartate 14. Mg(2+) contacts are provided by aspartate 14 and glycine 41. IMP-binding positions include 14–17 (DEGK), 39–42 (NAGH), threonine 130, arginine 144, glutamine 225, threonine 240, and arginine 304. Histidine 42 (proton donor) is an active-site residue. 300–306 (STTGRAR) provides a ligand contact to substrate. GTP is bound by residues arginine 306, 332 to 334 (KLD), and 414 to 416 (STG).

The protein belongs to the adenylosuccinate synthetase family. In terms of assembly, homodimer. It depends on Mg(2+) as a cofactor.

It localises to the cytoplasm. The catalysed reaction is IMP + L-aspartate + GTP = N(6)-(1,2-dicarboxyethyl)-AMP + GDP + phosphate + 2 H(+). It participates in purine metabolism; AMP biosynthesis via de novo pathway; AMP from IMP: step 1/2. Its function is as follows. Plays an important role in the de novo pathway of purine nucleotide biosynthesis. Catalyzes the first committed step in the biosynthesis of AMP from IMP. This is Adenylosuccinate synthetase from Pseudomonas putida (strain W619).